The following is a 290-amino-acid chain: Light-independent protochlorophyllide reductase iron-sulfur ATP-binding protein (290 aa).

ATP contacts are provided by residues 10-15 and K39; that span reads GIGKST. S14 serves as a coordination point for Mg(2+). Positions 95 and 129 each coordinate [4Fe-4S] cluster. Position 180 to 181 (180 to 181) interacts with ATP; sequence NR.

It belongs to the NifH/BchL/ChlL family. In terms of assembly, homodimer. Protochlorophyllide reductase is composed of three subunits; ChlL, ChlN and ChlB. [4Fe-4S] cluster is required as a cofactor.

The protein localises to the plastid. Its subcellular location is the chloroplast. The catalysed reaction is chlorophyllide a + oxidized 2[4Fe-4S]-[ferredoxin] + 2 ADP + 2 phosphate = protochlorophyllide a + reduced 2[4Fe-4S]-[ferredoxin] + 2 ATP + 2 H2O. Its pathway is porphyrin-containing compound metabolism; chlorophyll biosynthesis (light-independent). In terms of biological role, component of the dark-operative protochlorophyllide reductase (DPOR) that uses Mg-ATP and reduced ferredoxin to reduce ring D of protochlorophyllide (Pchlide) to form chlorophyllide a (Chlide). This reaction is light-independent. The L component serves as a unique electron donor to the NB-component of the complex, and binds Mg-ATP. The protein is Light-independent protochlorophyllide reductase iron-sulfur ATP-binding protein of Pyropia yezoensis (Susabi-nori).